The chain runs to 426 residues: UPF0761 membrane protein Nmul_A0452 (426 aa).

A run of 6 helical transmembrane segments spans residues leucine 48–phenylalanine 68, leucine 106–aspartate 126, leucine 145–leucine 165, leucine 187–valine 207, alanine 217–phenylalanine 237, and isoleucine 255–isoleucine 275.

This sequence belongs to the UPF0761 family.

The protein localises to the cell inner membrane. In Nitrosospira multiformis (strain ATCC 25196 / NCIMB 11849 / C 71), this protein is UPF0761 membrane protein Nmul_A0452.